A 354-amino-acid polypeptide reads, in one-letter code: Nicotinate-nucleotide--dimethylbenzimidazole phosphoribosyltransferase (354 aa).

The Proton acceptor role is filled by Glu-313.

Belongs to the CobT family.

The catalysed reaction is 5,6-dimethylbenzimidazole + nicotinate beta-D-ribonucleotide = alpha-ribazole 5'-phosphate + nicotinate + H(+). It functions in the pathway nucleoside biosynthesis; alpha-ribazole biosynthesis; alpha-ribazole from 5,6-dimethylbenzimidazole: step 1/2. In terms of biological role, catalyzes the synthesis of alpha-ribazole-5'-phosphate from nicotinate mononucleotide (NAMN) and 5,6-dimethylbenzimidazole (DMB). The protein is Nicotinate-nucleotide--dimethylbenzimidazole phosphoribosyltransferase of Ralstonia nicotianae (strain ATCC BAA-1114 / GMI1000) (Ralstonia solanacearum).